The primary structure comprises 505 residues: Neuronal acetylcholine receptor subunit alpha-3 (505 aa).

Positions 1 to 31 (MGSGPLSLPLALSPPRLLLLLLLSLLPVARA) are cleaved as a signal peptide. At 32 to 250 (SEAEHRLFER…PLFYTINLII (219 aa)) the chain is on the extracellular side. N-linked (GlcNAc...) asparagine glycosylation is found at N55 and N172. Disulfide bonds link C159/C173 and C223/C224. The helical transmembrane segment at 251 to 266 (PCLLISFLTVLVFYLP) threads the bilayer. At 267-268 (SD) the chain is on the cytoplasmic side. The chain crosses the membrane as a helical span at residues 269–285 (CGEKVTLCISVLLSLTV). The Extracellular segment spans residues 286–307 (FLLVITETIPSTSLVIPLIGEY). The chain crosses the membrane as a helical span at residues 308-326 (LLFTMIFVTLSIVITVFVL). The Cytoplasmic segment spans residues 327-474 (NVHYRTPTTH…QDDWKYVAMV (148 aa)). A phosphoserine mark is found at S413 and S416. A helical transmembrane segment spans residues 475–493 (IDRIFLWVFTLVCILGTAG). The Extracellular portion of the chain corresponds to 494-505 (LFLQPLMAREDA).

This sequence belongs to the ligand-gated ion channel (TC 1.A.9) family. Acetylcholine receptor (TC 1.A.9.1) subfamily. Alpha-3/CHRNA3 sub-subfamily. Neuronal AChR is composed of two different types of subunits: alpha and beta. CHRNA3/Alpha-3 subunit can be combined to CHRNA5/alpha-5, CHRNB2/beta-2 CHRNB3/beta-3 or CHRNB4/beta-4 to give rise to functional receptors. Forms stoichiometries such as (CHRNA3)2:(CHRNB4)3 or (CHRNA3:CHRNB4)2:CHRNB3. Part of a complex composed of STUB1/CHIP, VCP/p97, CHRNA3, and UBXN2A that modulates the ubiquitination and endoplasmic reticulum-associated degradation (ERAD) of CHRNA3. Within the complex UBXN2A acts as a scaffold protein required for the interaction of CHRNA3 with VCP/p97, this interaction also inhibits CHRNA3 ubiquitination by STUB1/CHIP and subsequently ERAD. Interacts with UBXN2A (via SEP domain), the interaction is required for the interaction of CHRNA3 in the STUB1:VCP:UBXN2A complex. Interacts with RIC3; which is required for proper folding and assembly. Interacts with LYPD6. Ubiquitinated; by STUB1/CHIP and thereafter degraded by the 26S proteosome complex.

It is found in the synaptic cell membrane. It localises to the cell membrane. The protein resides in the endoplasmic reticulum. The protein localises to the golgi apparatus. The enzyme catalyses Ca(2+)(in) = Ca(2+)(out). It carries out the reaction K(+)(in) = K(+)(out). The catalysed reaction is Na(+)(in) = Na(+)(out). Its activity is regulated as follows. Activated by a myriad of ligands such as acetylcholine, cytisine, nicotine, choline and epibatidine. The heteropentamer CHRNA3:CHRNB2 activity is blocked by alpha-conotoxins ImI, ImII, PnIA, GID and MII. The heteropentamer CHRNA3:CHRNB4 activity is blocked by the alpha-conotoxin ImI and AuIB. Component of neuronal acetylcholine receptors (nAChRs) that function as pentameric, ligand-gated cation channels with high calcium permeability among other activities. nAChRs are excitatory neurotrasnmitter receptors formed by a collection of nAChR subunits known to mediate synaptic transmission in the nervous system and the neuromuscular junction. Each nAchR subunit confers differential attributes to channel properties, including activation, deactivation and desensitization kinetics, pH sensitivity, cation permeability, and binding to allosteric modulators. CHRNA3 forms heteropentameric neuronal acetylcholine receptors with CHRNB2 and CHRNB4, with CHRNA5, and CHRNB3 as accesory subunits. CHRNA3:CHRNB4 being predominant in neurons of the autonomic ganglia, it is known as ganglionic nicotinic receptor. CHRNA3:CHRNB4 or CHRNA3:CHRNA5:CHRNB4 play also an important role in the habenulo-interpeduncular tract, modulating the mesolimbic dopamine system and affecting reward circuits and addiction. Hypothalamic CHRNA3:CHRNB4 nAChR activation by nicotine leads to activation of POMC neurons and a decrease in food intake. Also expressed in the urothelium where it modulates reflex bladder activity by increasing intracellular calcium through extracellular influx and basal ATP release. The sequence is that of Neuronal acetylcholine receptor subunit alpha-3 from Homo sapiens (Human).